Reading from the N-terminus, the 394-residue chain is Elongation factor Tu (394 aa).

The region spanning 10-204 (KPHVNVGTIG…ALDSYIPEPE (195 aa)) is the tr-type G domain. A G1 region spans residues 19-26 (GHVDHGKT). 19–26 (GHVDHGKT) contacts GTP. Thr-26 provides a ligand contact to Mg(2+). Residues 60-64 (GITIN) are G2. The segment at 81–84 (DCPG) is G3. GTP-binding positions include 81 to 85 (DCPGH) and 136 to 139 (NKCD). The tract at residues 136 to 139 (NKCD) is G4. Positions 174–176 (SAL) are G5.

It belongs to the TRAFAC class translation factor GTPase superfamily. Classic translation factor GTPase family. EF-Tu/EF-1A subfamily. Monomer.

Its subcellular location is the cytoplasm. The catalysed reaction is GTP + H2O = GDP + phosphate + H(+). GTP hydrolase that promotes the GTP-dependent binding of aminoacyl-tRNA to the A-site of ribosomes during protein biosynthesis. The sequence is that of Elongation factor Tu from Shewanella sp. (strain ANA-3).